Consider the following 395-residue polypeptide: Probable beta-1,3-galactosyltransferase 8 (395 aa).

The helical; Signal-anchor for type II membrane protein transmembrane segment at 5–27 threads the bilayer; that stretch reads AASGKAIIVLCLASFLAGSLFMS. Asn-117 carries N-linked (GlcNAc...) asparagine glycosylation.

This sequence belongs to the glycosyltransferase 31 family. The cofactor is Mn(2+).

The protein resides in the golgi apparatus membrane. The protein operates within protein modification; protein glycosylation. Functionally, beta-1,3-galactosyltransferase that transfers galactose from UDP-galactose to substrates with a terminal glycosyl residue. This Arabidopsis thaliana (Mouse-ear cress) protein is Probable beta-1,3-galactosyltransferase 8 (B3GALT8).